The primary structure comprises 204 residues: FMN-dependent NADH:quinone oxidoreductase 1 (204 aa).

FMN contacts are provided by residues Ser10 and 15-17; that span reads SLS.

The protein belongs to the azoreductase type 1 family. In terms of assembly, homodimer. FMN is required as a cofactor.

The enzyme catalyses 2 a quinone + NADH + H(+) = 2 a 1,4-benzosemiquinone + NAD(+). The catalysed reaction is N,N-dimethyl-1,4-phenylenediamine + anthranilate + 2 NAD(+) = 2-(4-dimethylaminophenyl)diazenylbenzoate + 2 NADH + 2 H(+). Functionally, quinone reductase that provides resistance to thiol-specific stress caused by electrophilic quinones. In terms of biological role, also exhibits azoreductase activity. Catalyzes the reductive cleavage of the azo bond in aromatic azo compounds to the corresponding amines. This chain is FMN-dependent NADH:quinone oxidoreductase 1, found in Rhizobium etli (strain ATCC 51251 / DSM 11541 / JCM 21823 / NBRC 15573 / CFN 42).